A 368-amino-acid chain; its full sequence is Histidinol-phosphate aminotransferase (368 aa).

K226 carries the post-translational modification N6-(pyridoxal phosphate)lysine.

The protein belongs to the class-II pyridoxal-phosphate-dependent aminotransferase family. Histidinol-phosphate aminotransferase subfamily. In terms of assembly, homodimer. Pyridoxal 5'-phosphate is required as a cofactor.

The catalysed reaction is L-histidinol phosphate + 2-oxoglutarate = 3-(imidazol-4-yl)-2-oxopropyl phosphate + L-glutamate. It participates in amino-acid biosynthesis; L-histidine biosynthesis; L-histidine from 5-phospho-alpha-D-ribose 1-diphosphate: step 7/9. The chain is Histidinol-phosphate aminotransferase from Colwellia psychrerythraea (strain 34H / ATCC BAA-681) (Vibrio psychroerythus).